We begin with the raw amino-acid sequence, 96 residues long: Putative pterin-4-alpha-carbinolamine dehydratase (96 aa).

The protein belongs to the pterin-4-alpha-carbinolamine dehydratase family.

It carries out the reaction (4aS,6R)-4a-hydroxy-L-erythro-5,6,7,8-tetrahydrobiopterin = (6R)-L-erythro-6,7-dihydrobiopterin + H2O. The polypeptide is Putative pterin-4-alpha-carbinolamine dehydratase (Paraburkholderia xenovorans (strain LB400)).